A 448-amino-acid polypeptide reads, in one-letter code: Adenylosuccinate synthetase 1 (448 aa).

Residues 22–28 and 50–52 each bind GTP; these read GDEGKGK and GHT. Catalysis depends on Asp-23, which acts as the Proton acceptor. Asp-23 and Gly-50 together coordinate Mg(2+). Residues 23-26, 48-51, Thr-139, Arg-153, Gln-234, Thr-249, and Arg-321 contribute to the IMP site; these read DEGK and NAGH. Residue His-51 is the Proton donor of the active site. A substrate-binding site is contributed by 317-323; sequence SVTGRPR. Residues Arg-323, 349–351, and 431–433 each bind GTP; these read KLD and STG.

The protein belongs to the adenylosuccinate synthetase family. As to quaternary structure, homodimer. Mg(2+) serves as cofactor.

It is found in the cytoplasm. It catalyses the reaction IMP + L-aspartate + GTP = N(6)-(1,2-dicarboxyethyl)-AMP + GDP + phosphate + 2 H(+). It functions in the pathway purine metabolism; AMP biosynthesis via de novo pathway; AMP from IMP: step 1/2. In terms of biological role, plays an important role in the de novo pathway of purine nucleotide biosynthesis. Catalyzes the first committed step in the biosynthesis of AMP from IMP. This chain is Adenylosuccinate synthetase 1, found in Burkholderia lata (strain ATCC 17760 / DSM 23089 / LMG 22485 / NCIMB 9086 / R18194 / 383).